The chain runs to 433 residues: Serine hydroxymethyltransferase (433 aa).

Residues Leu132 and 136–138 (GHL) contribute to the (6S)-5,6,7,8-tetrahydrofolate site. Residue Lys241 is modified to N6-(pyridoxal phosphate)lysine.

This sequence belongs to the SHMT family. As to quaternary structure, homodimer. Pyridoxal 5'-phosphate serves as cofactor.

It localises to the cytoplasm. The catalysed reaction is (6R)-5,10-methylene-5,6,7,8-tetrahydrofolate + glycine + H2O = (6S)-5,6,7,8-tetrahydrofolate + L-serine. Its pathway is one-carbon metabolism; tetrahydrofolate interconversion. The protein operates within amino-acid biosynthesis; glycine biosynthesis; glycine from L-serine: step 1/1. Its function is as follows. Catalyzes the reversible interconversion of serine and glycine with tetrahydrofolate (THF) serving as the one-carbon carrier. This reaction serves as the major source of one-carbon groups required for the biosynthesis of purines, thymidylate, methionine, and other important biomolecules. Also exhibits THF-independent aldolase activity toward beta-hydroxyamino acids, producing glycine and aldehydes, via a retro-aldol mechanism. This is Serine hydroxymethyltransferase from Afipia carboxidovorans (strain ATCC 49405 / DSM 1227 / KCTC 32145 / OM5) (Oligotropha carboxidovorans).